Here is a 116-residue protein sequence, read N- to C-terminus: Holo-[acyl-carrier-protein] synthase (116 aa).

Asp-8 and Glu-50 together coordinate Mg(2+).

This sequence belongs to the P-Pant transferase superfamily. AcpS family. It depends on Mg(2+) as a cofactor.

It is found in the cytoplasm. The enzyme catalyses apo-[ACP] + CoA = holo-[ACP] + adenosine 3',5'-bisphosphate + H(+). Its function is as follows. Transfers the 4'-phosphopantetheine moiety from coenzyme A to a Ser of acyl-carrier-protein. This chain is Holo-[acyl-carrier-protein] synthase, found in Beutenbergia cavernae (strain ATCC BAA-8 / DSM 12333 / CCUG 43141 / JCM 11478 / NBRC 16432 / NCIMB 13614 / HKI 0122).